Reading from the N-terminus, the 752-residue chain is Multifunctional tryptophan biosynthesis protein (752 aa).

One can recognise a Glutamine amidotransferase type-1 domain in the interval Asn-23 to Asn-223. An L-glutamine-binding site is contributed by Gly-74–Gly-76. Residue Cys-102 is the Nucleophile; for GATase activity of the active site. Residues Gln-106 and Ser-152–Leu-153 contribute to the L-glutamine site. Catalysis depends on for GATase activity residues His-197 and Glu-199. The indole-3-glycerol phosphate synthase stretch occupies residues Ile-239 to Leu-503. The tract at residues Leu-519–Gln-752 is N-(5'-phosphoribosyl)anthranilate isomerase.

It catalyses the reaction N-(5-phospho-beta-D-ribosyl)anthranilate = 1-(2-carboxyphenylamino)-1-deoxy-D-ribulose 5-phosphate. The catalysed reaction is 1-(2-carboxyphenylamino)-1-deoxy-D-ribulose 5-phosphate + H(+) = (1S,2R)-1-C-(indol-3-yl)glycerol 3-phosphate + CO2 + H2O. It carries out the reaction chorismate + L-glutamine = anthranilate + pyruvate + L-glutamate + H(+). The protein operates within amino-acid biosynthesis; L-tryptophan biosynthesis; L-tryptophan from chorismate: step 1/5. It participates in amino-acid biosynthesis; L-tryptophan biosynthesis; L-tryptophan from chorismate: step 3/5. Its pathway is amino-acid biosynthesis; L-tryptophan biosynthesis; L-tryptophan from chorismate: step 4/5. In terms of biological role, trifunctional enzyme bearing the Gln amidotransferase (GATase) domain of anthranilate synthase, indole-glycerolphosphate synthase, and phosphoribosylanthranilate isomerase activities. In Penicillium chrysogenum (Penicillium notatum), this protein is Multifunctional tryptophan biosynthesis protein (trpC).